The following is a 194-amino-acid chain: Nucleoside triphosphate pyrophosphatase (194 aa).

Residue aspartate 71 is the Proton acceptor of the active site.

The protein belongs to the Maf family. It depends on a divalent metal cation as a cofactor.

It localises to the cytoplasm. The catalysed reaction is a ribonucleoside 5'-triphosphate + H2O = a ribonucleoside 5'-phosphate + diphosphate + H(+). It carries out the reaction a 2'-deoxyribonucleoside 5'-triphosphate + H2O = a 2'-deoxyribonucleoside 5'-phosphate + diphosphate + H(+). In terms of biological role, nucleoside triphosphate pyrophosphatase. May have a dual role in cell division arrest and in preventing the incorporation of modified nucleotides into cellular nucleic acids. This is Nucleoside triphosphate pyrophosphatase from Paramagnetospirillum magneticum (strain ATCC 700264 / AMB-1) (Magnetospirillum magneticum).